Consider the following 396-residue polypeptide: Elongation factor Tu 2 (396 aa).

The region spanning 10–206 (KPHVNIGTIG…AVDEYIPTPE (197 aa)) is the tr-type G domain. Positions 19-26 (GHVDHGKT) are G1. A GTP-binding site is contributed by 19-26 (GHVDHGKT). Position 26 (Thr26) interacts with Mg(2+). The segment at 60-64 (GITIN) is G2. Residues 81–84 (DCPG) form a G3 region. Residues 81–85 (DCPGH) and 136–139 (NKVD) each bind GTP. The tract at residues 136–139 (NKVD) is G4. The interval 174–176 (SAL) is G5.

It belongs to the TRAFAC class translation factor GTPase superfamily. Classic translation factor GTPase family. EF-Tu/EF-1A subfamily. Monomer.

Its subcellular location is the cytoplasm. The catalysed reaction is GTP + H2O = GDP + phosphate + H(+). Its function is as follows. GTP hydrolase that promotes the GTP-dependent binding of aminoacyl-tRNA to the A-site of ribosomes during protein biosynthesis. The polypeptide is Elongation factor Tu 2 (Hyphomonas neptunium (strain ATCC 15444)).